The following is a 240-amino-acid chain: UDP-2,3-diacylglucosamine hydrolase (240 aa).

Mn(2+)-binding residues include aspartate 8, histidine 10, aspartate 41, asparagine 79, and histidine 114. 79–80 serves as a coordination point for substrate; that stretch reads NR. Positions 122, 160, 164, 167, and 195 each coordinate substrate. Mn(2+)-binding residues include histidine 195 and histidine 197.

This sequence belongs to the LpxH family. It depends on Mn(2+) as a cofactor.

The protein resides in the cell inner membrane. It catalyses the reaction UDP-2-N,3-O-bis[(3R)-3-hydroxytetradecanoyl]-alpha-D-glucosamine + H2O = 2-N,3-O-bis[(3R)-3-hydroxytetradecanoyl]-alpha-D-glucosaminyl 1-phosphate + UMP + 2 H(+). Its pathway is glycolipid biosynthesis; lipid IV(A) biosynthesis; lipid IV(A) from (3R)-3-hydroxytetradecanoyl-[acyl-carrier-protein] and UDP-N-acetyl-alpha-D-glucosamine: step 4/6. Its function is as follows. Hydrolyzes the pyrophosphate bond of UDP-2,3-diacylglucosamine to yield 2,3-diacylglucosamine 1-phosphate (lipid X) and UMP by catalyzing the attack of water at the alpha-P atom. Involved in the biosynthesis of lipid A, a phosphorylated glycolipid that anchors the lipopolysaccharide to the outer membrane of the cell. The protein is UDP-2,3-diacylglucosamine hydrolase of Pectobacterium carotovorum subsp. carotovorum (strain PC1).